We begin with the raw amino-acid sequence, 366 residues long: Terpene cyclase-like protein flvF (366 aa).

Belongs to the terpene synthase family. Homodimer.

The catalysed reaction is N,N-dimethyl-cadaverine + 2,6,9-trimethyl-13-oxatetracyclo[6.3.1.1(6,9).0(1,5)]tridecane carbocation = pre-flavunoidine + H(+). It participates in secondary metabolite biosynthesis; terpenoid biosynthesis. In terms of biological role, terpene cyclase-like protein; part of the gene cluster that mediates the biosynthesis of flavunoidine, an alkaloidal terpenoid with a tetracyclic cage-like core connected to dimethylcadaverine via a C-N bond and acylated with 5,5-dimethyl-L-pipecolate. The tetracyclic core is synthesized by the terpene cyclase flvE and the cytochrome P450 monooxygenase flvD. The terpene cyclase flvE catalyzes the cyclization of farnesyl pyrophosphate (FPP) to form (1R,4R,5S)-(+)-acoradiene and the cytochrome P450 monooxygenase flvD is then responsible for oxidative conversion of (1R,4R,5S)-(+)-acoradiene into the tetracyclic cage present in the final product flavunoidine. In parallel, the N-methyltransferase flvH dimethylates L-lysine to give N,N-dimethyl-L-Lysin which is decarboxylated by flvG to afford dimethylcadaverine. The terpene cyclase-like protein flvF is the enzyme that attaches the dimethylcadaverine precusor at the C-7 of the tetracyclic cage to yield pre-flavunoidine. The cytochrome monooxygenase flvC hydroxylates the C-10 position of pre-flavunoidine whereas the NRPS flvI acylates the terpenoid core at the hydroxylated C-10 with dimethylpipecolate to yield final flavunoidine. The bifunctional enzyme flvA and the dehydrogenase flvB are responsible for the synthesis of the dimethylpipecolate precursor. The PLP-dependent lyase domain of flvA might use L-O-acetyl-homoserine and alpha-keto-isovalerate to form an intermediary ketone that can cyclize intramolecularly to yield an imine. The imine can be reduced by flvB to yield the 6-carboxylated pipecolate. The C-terminal alpha-KG-dependent oxygenase domain of flvA is then proposed to catalyze the decarboxylation to yield dimethylpipecolate. The chain is Terpene cyclase-like protein flvF from Aspergillus flavus (strain ATCC 200026 / FGSC A1120 / IAM 13836 / NRRL 3357 / JCM 12722 / SRRC 167).